Consider the following 141-residue polypeptide: MAIILGADAHGNALKELIKSFLQEESYDIIDVTDINSDFIDNTLAVAKAVNEAEGRLGIMVDAYGAGPFMVATKLKGMVAAEVSDERSAYMTRGHNNARMITMGAEIVGPELAKNIAKGFVTGPYDGGRHQIRVDMLNKMA.

It belongs to the LacAB/RpiB family. In terms of assembly, heteromultimeric protein consisting of LacA and LacB.

The enzyme catalyses aldehydo-D-galactose 6-phosphate = keto-D-tagatose 6-phosphate. Its pathway is carbohydrate metabolism; D-galactose 6-phosphate degradation; D-tagatose 6-phosphate from D-galactose 6-phosphate: step 1/1. The polypeptide is Galactose-6-phosphate isomerase subunit LacA 1 (Streptococcus pyogenes serotype M18 (strain MGAS8232)).